We begin with the raw amino-acid sequence, 170 residues long: Ubiquitin-conjugating enzyme E2 G1 (170 aa).

Methionine 1 carries the N-acetylmethionine modification. An N-acetylthreonine; in Ubiquitin-conjugating enzyme E2 G1, N-terminally processed modification is found at threonine 2. One can recognise a UBC core domain in the interval 5-166; that stretch reads QSALLLRRQL…VARCVRKSQE (162 aa). The Glycyl thioester intermediate role is filled by cysteine 90.

The protein belongs to the ubiquitin-conjugating enzyme family. Autoubiquitinated.

It carries out the reaction S-ubiquitinyl-[E1 ubiquitin-activating enzyme]-L-cysteine + [E2 ubiquitin-conjugating enzyme]-L-cysteine = [E1 ubiquitin-activating enzyme]-L-cysteine + S-ubiquitinyl-[E2 ubiquitin-conjugating enzyme]-L-cysteine.. It functions in the pathway protein modification; protein ubiquitination. In terms of biological role, accepts ubiquitin from the E1 complex and catalyzes its covalent attachment to other proteins. In vitro catalyzes 'Lys-48'-, as well as 'Lys-63'-linked polyubiquitination. May be involved in degradation of muscle-specific proteins. Mediates polyubiquitination of CYP3A4. In Macaca fascicularis (Crab-eating macaque), this protein is Ubiquitin-conjugating enzyme E2 G1 (UBE2G1).